The chain runs to 269 residues: Probable sulfate transport system permease protein cysT (269 aa).

The next 7 membrane-spanning stretches (helical) occupy residues 10 to 30 (SWRITLGYLLFMLILPILALL), 60 to 80 (MALIASIVNGIFGIFIAWILV), 92 to 112 (AAIDLPFALPTSVAGLTLATV), 130 to 150 (VVFTKLGVGVAMIFVSFPFVV), 179 to 199 (FWKVIFPSLIPSLLTGIALAF), 208 to 228 (SVVIIASNIPFKDLTAPVLIF), and 240 to 260 (TVIGTVILSISLFILVGINII). The ABC transmembrane type-1 domain maps to 54–255 (YSITLSMALI…ILSISLFILV (202 aa)).

This sequence belongs to the binding-protein-dependent transport system permease family. CysTW subfamily.

It localises to the plastid. The protein resides in the chloroplast membrane. Functionally, part of the ABC transporter complex cysAWTP (TC 3.A.1.6.1) involved in sulfate/thiosulfate import. Probably responsible for the translocation of the substrate across the membrane. The chain is Probable sulfate transport system permease protein cysT (cysT) from Mesostigma viride (Green alga).